The sequence spans 364 residues: Homeobox protein Nkx-6.1 (364 aa).

Positions leucine 35–serine 134 are disordered. Low complexity-rich tracts occupy residues proline 48–alanine 92 and alanine 109–serine 134. A repressor domain region spans residues leucine 101–arginine 268. Residue arginine 189 is modified to Asymmetric dimethylarginine. Positions arginine 236–histidine 295 form a DNA-binding region, homeobox. Positions lysine 294–serine 364 are disordered. Positions lysine 304–serine 317 are enriched in basic and acidic residues. Residues glutamine 306–serine 364 form an involved in DNA-binding region.

As to expression, pancreatic beta cells.

It localises to the nucleus. In terms of biological role, together with NKX2-2 and IRX3 acts to restrict the generation of motor neurons to the appropriate region of the neural tube. Belongs to the class II proteins of neuronal progenitor factors, which are induced by SHH signals. Transcription factor which binds to specific A/T-rich DNA sequences in the promoter regions of a number of genes. Involved in transcriptional regulation in islet beta cells. Binds to the insulin promoter and is involved in regulation of the insulin gene. The polypeptide is Homeobox protein Nkx-6.1 (NKX6-1) (Mesocricetus auratus (Golden hamster)).